The sequence spans 129 residues: Small ribosomal subunit protein uS12 (129 aa).

Residue Asp89 is modified to 3-methylthioaspartic acid. The interval 101–129 is disordered; sequence SLDTSGVADRKQSRSKYGAKQPKAGAAKK. Low complexity predominate over residues 116-129; the sequence is KYGAKQPKAGAAKK.

Belongs to the universal ribosomal protein uS12 family. As to quaternary structure, part of the 30S ribosomal subunit. Contacts proteins S8 and S17. May interact with IF1 in the 30S initiation complex.

Functionally, with S4 and S5 plays an important role in translational accuracy. Interacts with and stabilizes bases of the 16S rRNA that are involved in tRNA selection in the A site and with the mRNA backbone. Located at the interface of the 30S and 50S subunits, it traverses the body of the 30S subunit contacting proteins on the other side and probably holding the rRNA structure together. The combined cluster of proteins S8, S12 and S17 appears to hold together the shoulder and platform of the 30S subunit. This chain is Small ribosomal subunit protein uS12, found in Chlorobaculum parvum (strain DSM 263 / NCIMB 8327) (Chlorobium vibrioforme subsp. thiosulfatophilum).